A 170-amino-acid chain; its full sequence is MDLKSLIREVPDFPKPGILFRDITTLLQNEQGLRYTIDRLTQAFSDQAIDYVAGIESRGFIFGAPLAYKLGAGFVPIRKAGKLCAEVHTVEYALEYGTDRLEIHKDAIHTGGRVLIVDDLIATGGTAAAAAQLITLCGGDLVSYAFIIELQDLGGRKNLPDVPIKVLVEY.

The protein belongs to the purine/pyrimidine phosphoribosyltransferase family. As to quaternary structure, homodimer.

Its subcellular location is the cytoplasm. It carries out the reaction AMP + diphosphate = 5-phospho-alpha-D-ribose 1-diphosphate + adenine. It functions in the pathway purine metabolism; AMP biosynthesis via salvage pathway; AMP from adenine: step 1/1. Functionally, catalyzes a salvage reaction resulting in the formation of AMP, that is energically less costly than de novo synthesis. This is Adenine phosphoribosyltransferase from Cyanothece sp. (strain PCC 7425 / ATCC 29141).